The sequence spans 1021 residues: Translation initiation factor IF-2 (1021 aa).

Residues 50–422 are disordered; that stretch reads AFPAEGGSAS…RMGAMVPRGN (373 aa). Positions 57 to 71 are enriched in gly residues; that stretch reads SASGGRPGGRPGPGN. Residues 75–95 are compositionally biased toward pro residues; sequence PAPPRPGLAPRPGPRPVPGRP. Positions 96 to 112 are enriched in low complexity; it reads GPAARPGGPAAPSAPAA. Residues 113-129 show a composition bias toward pro residues; that stretch reads PSAPAPGAPAASPPASQ. Composition is skewed to low complexity over residues 130–159, 167–178, and 187–196; these read PRPIAASAAAPPPAATSIPPVSSPAAASGP, GGPAAPGRARPG, and SAPSAPSAGG. Residues 198-208 are compositionally biased toward pro residues; that stretch reads RPGPRPGPRPS. Low complexity predominate over residues 219-233; it reads SAGPRQSAGQSGSGP. Composition is skewed to pro residues over residues 234–254 and 262–273; these read ASPPRPGAPRPGPRPGGPRPG and RPSPGSMPPRPG. Gly residues-rich tracts occupy residues 275-291 and 306-389; these read RPGGSGGMPPRPGGSGG and GAPG…GGRG. Positions 390–401 are enriched in basic residues; that stretch reads RPGRQRKSKRAK. The 173-residue stretch at 514-686 folds into the tr-type G domain; that stretch reads IRPPVVTVMG…IILTADASLD (173 aa). Positions 523–530 are G1; sequence GHVDHGKT. 523–530 serves as a coordination point for GTP; that stretch reads GHVDHGKT. Positions 548–552 are G2; it reads GITQH. The G3 stretch occupies residues 573-576; that stretch reads DTPG. GTP is bound by residues 573–577 and 627–630; these read DTPGH and NKVD. The tract at residues 627 to 630 is G4; it reads NKVD. The segment at 663 to 665 is G5; that stretch reads SAR.

This sequence belongs to the TRAFAC class translation factor GTPase superfamily. Classic translation factor GTPase family. IF-2 subfamily.

It localises to the cytoplasm. Its function is as follows. One of the essential components for the initiation of protein synthesis. Protects formylmethionyl-tRNA from spontaneous hydrolysis and promotes its binding to the 30S ribosomal subunits. Also involved in the hydrolysis of GTP during the formation of the 70S ribosomal complex. This is Translation initiation factor IF-2 from Frankia alni (strain DSM 45986 / CECT 9034 / ACN14a).